A 3469-amino-acid polypeptide reads, in one-letter code: MATRRAGRSWEVSPSGPRPAAGEAAAASPPVLSLSHFCRSPFLCFGDVRLGGSRTLPLLLHNPNDEAARVEVCRAPAAQQGFSVSPRRFQLQPKEKIVISVNWTPLKEGRVRETVTFLVNDVLKHQAILLGNAEEQKKKKRSLWGTIKKKKMSASSNNKRISSAQNVNKTFCVSQKADRVRNPLQACENLDVNEGCSPTENNSLILEENKIPISPISPIFKECNGETSLPLSVRRSTTYISLHARENGDLLKVEDASILEDFSFSEKVVNETSFNSTNNINDQTEENCKLILTPACSSTLNITQSQGNFLSPDSFVKNSRAANNELEVVTCLSSNILMKDNSMPLHLESKSVHENYRKILSPDSFINDNYGLNQDLESEPINPILSPNQFVKDNMAYTCIYQQTCKLSLSSNKNSQFSQSQDPRTNGILPCIPECQSSKSPKATFEEHRALEMKSDCYSFTKNQPKFSAMQDISSCSQDKLTRRPILSATITKRKSNFTRENQKETNKPKAKRCLNSVAGEFEKVTDNIKEKDGFQSCLPVIDPVFSKPKSYKIVVTPPSKTTLIARKRRSEGDREDANVRITATGHSEIQEIKRIHFSPVESKTSVLKKTKKMTTPISKHFNREKLNLKKKTDSRIYRTPNSKTSKKTKPIVAVAQSTLTFIKPLKTDIPRHPMPFAAKNMFYDERWKEKQEQGFTWWLNFILTPDDFTVKTNISEVNAATLLLGVESQHKISVPRAPTKDEMSLRAYTARCRLNRLRRAACRLFTSEKMVKAIKKLEIEIEARRLIVRRDRHLWKDVGERQKVLNWLLSYNPLWLRIGLETVFGELLSLEDNSDVTGLAVFILNRLLWNPDIAAEYRHPTVPHLYRDGHEEALSKFTLKKLLLLVCFLDYAKISKLIDHDPCLFCKDAEFKTSKDILLAFSRDFLSGEGDLSRHLSLLGLPVNHVQTPFDEFDFAVTNLAVDLQCGVRLVRIMELLTRDWNLSKKLRMPAISRLQKMHNVDIVLQILRSQGIQLNDEHGNAILSKDIVDRHREKTLALLWKIAFAFQVDISLNLDQLKEEIDFLKHTQSMKKMSAQSCHSDVIINKKKDNRNSGSFEQYSESIKLLMEWVNAVCAFYNKKVENFTVSFSDGRVLCYLIHHYHPYYVPFDAICQRTTQTIECTQTGSVVLNSSSESDGSSLDLSLKAFDHENTSELYKELLENEKKNFQLVRSAVRDLGGIPAMINHSDMSNTIPDEKVVITYLSFLCSRLLDLCKETRAARLIQTTWRKYKLKTDMKRHQEQDKAARIIQSAIINFLTKRRLKKEISAALAIQKYWRRFLAQRKLLMLKKEKLEKVQNESASIIQRYWRRYSTRKQFLKLRYYSIILQSRIRMIIAVTSYKRYLWATVTIQRHWRASLRRKHDQQRYKMLKSSCLIIQSMFRRWKRRKMQLQIKATRVLQRAFREWHVRKRAKEEKSAIVIQSWYRMHKELRKYVQIRSCVVIIQTRFRCLQAQKLYKRKKEAILTIQKYYKAYLKGKMERTNYLQKRAAAIRLQTAFRRMKARNLYRQSRAACVLQSYWRMRQDRFRFLNLKKITTKLQAQVRKHQQLQKYRKIKKAALVIQIHFRAYVSAKKVLASYQKTRSAVLVLQSAYRGMQARKKFIHILTSIIKIQSCYRAYISRKRFLRLKNATVKLQSIVKMRQTRKRYLHWRAASLFIQRWYRSAKLAALKRHQYVQMRESCIKLQAFVRGHLVRKQIRLQRQAAISLQSYFRMRKKRQYYLEIYKATLVIQNYYRAYKAQVNQRKNFLQVKRAVTCLQAAYRGYKVRQLIKQQSIAALKIQTAFRGYRERKKYQYVLQSTIKIQRWYRTCRTVRDVRTQFLKTRAAVISLQCAFRGWKVRKQIRRERQAAVRIQSAFRMAKAQKQFKLLKTAALVIQQHLRAWTAGKRQRMEYIELREAALRLQSTWKGKRVRRQVQKQHKCAVIIQSNYRMYVQQKKWKIMKKAARLIQMYYRAYSIGRKQRQLYLKTKAAAVVLQSAYRSMKVRKKIKECNRAAVTIQSTYRAYKTKKNYTNCRASAIIIQRWYRGTKIANHQRKEYLNLKKTAVKIQAIYRGIRVRRHNRHLHMAATVIQAMFKMHQAKMRYHKMRTAAVIIQVRYRAYREGKIQRAKYLTIMKAITVLQASFRGTRVRQTLRKMQSAATLIQSYYRRHRQQAYFTKLKKVTRTIQQRYRAVKERNTQLQRYNKLRHSIICIQAGFRGMKARRHLKSMHLAATLIQRRFRTLRMRRRFLHLRKTAIWIQRKYRATVCAKHYFQHFVRVQKAVIKIQSSYRGWMVRKKMQEVHRAATAIQAAFRMHRANVKYQALKHASVVIQQQFRASRAAKLQRQCYLQQRHSALILQAAFRGMKARGHLKNMHSSATLIQSTFRSLVVRKRFISLKRATVFVQRKYRATICARHHLHQFLKLKKAVITIQSSYRRLVAKKKLQEMHRAAVLIQATYRMHRTYVTFQTWKHASILIQQHYRTYRAAKLQRENSVPQRRSALIIQAVYKGMKARQLLREKHRAAIIIQSTYRMYRQYLFYQKIQWATKVIQEKYRANKKKALQHSALRNAAAACTEADFQDMILRKPTQEQHQAATIIQKHFKASKVRKHYLHLRANVIFVQRRYRALTAVRTQAVVCTQSSYRSCKVQEDMQHRHLAATRIQSFYRMHRAKLDYQAKKTAVAVIQNYFRSYIRVKVEREKFLAVQKSVRIIQAAFRGMKVRERLKSLSEVNMVASAKQSAFYSCRTEAQCAAVHGSALRTQKWHGASLVTCSQEAEYPQREALVATQRAFCEMVTRKLETQKCAALRIQYFLQMAVCRRRFVQQKRAAVTLQQYFRTWQTRRQFLLYRKAAVVLQNHHRAFLSTKHQRQVYLQIRSSIIMIQARTRGFIQKRRFQKIKDSTIKIQAVWRSYKARKYLHQVKAACKIQAWYRYWKARKDYLAVLKAVKIIQGCFYTKLERRRFLNVRASTIIIQRKWRAILSGRIACEHFLMIKRHQAACLIQANFRRYKGRQVFLRQKSAALTIQRYIRARKAGKCQRIKYVELKKSTVVLQALVRGWLVRKRILEQRTKIRLLHFTAAAYYHLSALKIQRAYKRHMAMKNANKQVNAVICIQRWFRTRLQQKRFAQKYPSILTSQHEVPECMSQQNRAASVIQKAVRRFLLRKKQEKFNNAISRIQSLWRGYSWRKKNDCTKIKAIRLSLQLVNREIREENKLYKRTALALHYLLTYKHLSAILEALKHLEVVTRLSPLCCENMAQSGAVSKIFVLIRSCNRSIPCMEVIRYAVQVLLNVAKYEKTTAAVSDVENCIDTLLDLLQMYREKPGDKVADKGGSIFTKTCCLLAVLLKTTNRASSVRSKSKVVDRIYSLYKLTARKHKMNTERTLYKQKMNSSISTPFIPETPVRTRIVSRLKPDWVLRRDNMEEITNPLQAIQMVMDTLGIPY.

Residues 1-24 (MATRRAGRSWEVSPSGPRPAAGEA) form a disordered region. The segment covering 13-24 (SPSGPRPAAGEA) has biased composition (low complexity). A phosphoserine mark is found at Ser273, Ser276, Ser361, Ser386, Ser420, and Ser599. One can recognise a Calponin-homology (CH) 1 domain in the interval 913–1049 (KTSKDILLAF…LLWKIAFAFQ (137 aa)). Positions 1050-1069 (VDISLNLDQLKEEIDFLKHT) form a coiled coil. Position 1095 is a phosphoserine (Ser1095). One can recognise a Calponin-homology (CH) 2 domain in the interval 1102-1253 (SESIKLLMEW…YLSFLCSRLL (152 aa)). IQ domains are found at residues 1258–1287 (ETRA…QDKA), 1339–1370 (QNES…IILQ), 1385–1414 (YLWA…MLKS), 1529–1560 (KRAA…VLQS), 1574–1605 (LKKI…LVIQ), 1624–1653 (TRSA…SIIK), 1647–1676 (ILTS…ATVK), 1720–1749 (MRES…AAIS), 1743–1774 (QRQA…LVIQ), 1793–1822 (VKRA…AALK), 1816–1845 (QSIA…STIK), 1866–1895 (TRAA…AAVR), 1889–1920 (ERQA…LVIQ), 1939–1970 (LREA…VIIQ), 1962–1993 (QHKC…RLIQ), 2012–2041 (TKAA…AAVT), 2035–2066 (CNRA…IIIQ), 2085–2116 (LKKT…TVIQ), 2108–2139 (LHMA…VIIQ), 2158–2189 (IMKA…TLIQ), 2181–2210 (MQSA…VTRT), 2231–2262 (LRHS…TLIQ), 2304–2333 (VQKA…AATA), 2327–2358 (VHRA…VVIQ), 2377–2408 (QRHS…TLIQ), 2400–2431 (MHSS…VFVQ), 2450–2481 (LKKA…VLIQ), 2523–2554 (QRRS…IIIQ), 2681–2712 (RHLA…AVIQ), 2731–2762 (VQKS…MVAS), 2851–2882 (QKRA…VVLQ), 2901–2930 (IRSS…STIK), 2924–2955 (IKDS…KIQA), 2946–2977 (QVKA…KIIQ), 3021–3050 (RHQA…AALT), 3071–3102 (LKKS…RLLH), 3173–3202 (QNRA…AISR), and 3196–3227 (FNNA…IRLS).

The protein localises to the cytoplasm. It is found in the cytoskeleton. The protein resides in the spindle. It localises to the nucleus. In terms of biological role, probable role in mitotic spindle regulation and coordination of mitotic processes. May have a preferential role in regulating neurogenesis. The sequence is that of Abnormal spindle-like microcephaly-associated protein homolog (ASPM) from Canis lupus familiaris (Dog).